A 783-amino-acid chain; its full sequence is Ubiquitin carboxyl-terminal hydrolase 1 (783 aa).

Disordered stretches follow at residues 1–22 (MPGVIPSESNGLSRGSPSKKNR) and 34–55 (KRALDFTDSQENEEKTSEYKGS). Residues 7–16 (SESNGLSRGS) are compositionally biased toward polar residues. A phosphoserine mark is found at Ser16 and Ser42. A compositionally biased stretch (basic and acidic residues) spans 45-55 (NEEKTSEYKGS). Ser67 bears the Phosphoserine mark. Residues 81 to 783 (VGLNNLGNTC…TPYLLFYKKL (703 aa)) form the USP domain. Catalysis depends on Cys90, which acts as the Nucleophile. The disordered stretch occupies residues 234-311 (EEYQKEEMSD…RKAAGDTLEI (78 aa)). Composition is skewed to basic and acidic residues over residues 250–273 (DNMRHSEDYKEKLSKGNGKRKSDA) and 284–296 (ISKEHQSSEENQR). Ser473 carries the phosphoserine modification. Residue His591 is the Proton acceptor of the active site. The interval 685–722 (PDKVASTALPENRNSETNNTNGTDESDSNKESSDQTGI) is disordered. Position 766 is a phosphoserine (Ser766).

Belongs to the peptidase C19 family. Interacts with FANCD2 and PCNA. Interacts with WDR48. Interacts with ATAD5; the interaction regulates USP1-mediated PCNA deubiquitination. Post-translationally, autocatalytic cleavage of USP1 following UV irradiation inactivates it, leading to an increase in ubiquitinated PCNA, recruitment of POLH and translesion synthesis. Ubiquitinated by the CRL2(KLHDC2) complex following autocatalytic cleavage, leading to its degradation: the CRL2(KLHDC2) complex recognizes the diglycine (Gly-Gly) at the C-terminus.

It is found in the nucleus. The enzyme catalyses Thiol-dependent hydrolysis of ester, thioester, amide, peptide and isopeptide bonds formed by the C-terminal Gly of ubiquitin (a 76-residue protein attached to proteins as an intracellular targeting signal).. Functionally, negative regulator of DNA damage repair which specifically deubiquitinates monoubiquitinated FANCD2. Also involved in PCNA-mediated translesion synthesis (TLS) by deubiquitinating monoubiquitinated PCNA. Has almost no deubiquitinating activity by itself and requires the interaction with WDR48 to have a high activity. The chain is Ubiquitin carboxyl-terminal hydrolase 1 from Bos taurus (Bovine).